A 132-amino-acid polypeptide reads, in one-letter code: Small ribosomal subunit protein uS8 (132 aa).

It belongs to the universal ribosomal protein uS8 family. Part of the 30S ribosomal subunit. Contacts proteins S5 and S12.

In terms of biological role, one of the primary rRNA binding proteins, it binds directly to 16S rRNA central domain where it helps coordinate assembly of the platform of the 30S subunit. This is Small ribosomal subunit protein uS8 from Exiguobacterium sp. (strain ATCC BAA-1283 / AT1b).